Consider the following 413-residue polypeptide: Acyltransferase mokF (413 aa).

Arg-93 is a binding site for monacolin J. Ser-96 (acyl-ester intermediate) is an active-site residue. Monacolin J is bound by residues Arg-193, Tyr-208, and Tyr-278. A 2-methylbutanoate-binding site is contributed by Gly-386.

The protein belongs to the class-A beta-lactamase family.

It carries out the reaction monacolin J carboxylate + (S)-2-methylbutanoyl-[2-methylbutanoate polyketide synthase] = lovastatin carboxylate + holo-[2-methylbutanoate polyketide synthase]. The protein operates within polyketide biosynthesis; lovastatin biosynthesis. Acyltransferase; part of the gene cluster that mediates the biosynthesis of monakolin K, also known as lovastatin, and which acts as a potent competitive inhibitor of HMG-CoA reductase. Monakolin K biosynthesis is performed in two stages. The first stage is catalyzed by the nonaketide synthase mokA, which belongs to type I polyketide synthases and catalyzes the iterative nine-step formation of the polyketide. This PKS stage is completed by the action of dehydrogenase mokE, which catalyzes the NADPH-dependent reduction of the unsaturated tetra-, penta- and heptaketide intermediates that arise during the mokA-mediated biosynthesis of the nonaketide chain and leads to dihydromonacolin L. Covalently bound dihydromonacolin L is released from mokA by the mokD esterase. Conversion of dihydromonacolin L into monacolin L and then monacolin J is subsequently performed with the participation of molecular oxygen and P450 monoogygenase mokC. Finally, mokF performs the conversion of monacoline J to monacoline K through the addition of the side-chain diketide moiety (2R)-2-methylbutanoate produced by the diketide synthase mokB. This chain is Acyltransferase mokF, found in Monascus pilosus (Red mold).